The sequence spans 392 residues: 2'-deamino-2'-hydroxyneamine transaminase (392 aa).

At Lys-249 the chain carries N6-(pyridoxal phosphate)lysine.

The protein belongs to the class-III pyridoxal-phosphate-dependent aminotransferase family. It depends on pyridoxal 5'-phosphate as a cofactor.

It carries out the reaction neamine + 2-oxoglutarate = 6'-oxoparomamine + L-glutamate. The catalysed reaction is 2'-deamino-2'-hydroxyneamine + 2-oxoglutarate = 2'-deamino-2'-hydroxy-6'-dehydroparomamine + L-glutamate. It functions in the pathway antibiotic biosynthesis; kanamycin biosynthesis. Its function is as follows. Aminotransferase that has 6'-oxoglucosaminyl:L-glutamate aminotransferase activity by catalyzing pyridoxal-5'-phosphate-mediated transamination leading to the conversion of paromamine to neamine in the biosynthetic pathway of kanamycin B. The chain is 2'-deamino-2'-hydroxyneamine transaminase (kacL) from Streptomyces kanamyceticus.